The chain runs to 248 residues: UDP-2,3-diacylglucosamine hydrolase (248 aa).

Asp8, His10, Asp41, Asn79, and His114 together coordinate Mn(2+). Asn79 to Arg80 provides a ligand contact to substrate. Residues Asp122, Ser160, Asp171, Gln174, and His202 each contribute to the substrate site. Positions 202 and 204 each coordinate Mn(2+).

This sequence belongs to the LpxH family. The cofactor is Mn(2+).

The protein localises to the cell inner membrane. It catalyses the reaction UDP-2-N,3-O-bis[(3R)-3-hydroxytetradecanoyl]-alpha-D-glucosamine + H2O = 2-N,3-O-bis[(3R)-3-hydroxytetradecanoyl]-alpha-D-glucosaminyl 1-phosphate + UMP + 2 H(+). The protein operates within glycolipid biosynthesis; lipid IV(A) biosynthesis; lipid IV(A) from (3R)-3-hydroxytetradecanoyl-[acyl-carrier-protein] and UDP-N-acetyl-alpha-D-glucosamine: step 4/6. Its function is as follows. Hydrolyzes the pyrophosphate bond of UDP-2,3-diacylglucosamine to yield 2,3-diacylglucosamine 1-phosphate (lipid X) and UMP by catalyzing the attack of water at the alpha-P atom. Involved in the biosynthesis of lipid A, a phosphorylated glycolipid that anchors the lipopolysaccharide to the outer membrane of the cell. The sequence is that of UDP-2,3-diacylglucosamine hydrolase from Stenotrophomonas maltophilia (strain K279a).